We begin with the raw amino-acid sequence, 867 residues long: MSDVFNTPHARRTITQALGLTNVSDRTQDWLLPEPWNPPMDPIKNSQEAAEYLQRNQYRMLKPRAIPENTPLDTSELFPHLAEFVGSGAFGTSTLVPAGSTEYIPRYYPTHKPEHNKPTPFGHYDVALLKQMTYQLTNGKDNPEEEGTTFRQFRDTIVEQQYGSGTSQGQLARLVAMKEVATGRNPNKSPKELGLSMEEIATMLEQTLPIGQPGGDEGWPSLTTTLSELLNPAEGMDYLPHITMKSSSGLPFIGKTKGETVTSALAICDTFLREVSECVKEGAMASDNQKLQKLLQDYWYLSCGLLFPKAERYEKKAWLTKTRNIWSAPFPTHLLLSTISWPIMNSSKNNILNVPECVSLYGFNPFSGGMDAVVTNILAQPDETLFLIYADNIYIYMDRTWFSIDLEKGEANATPEHAQAVSYYLLTRGWTQDDGSPAFNATWATIAMMIAPSLVVDSSCLFMNLQLKTYGQGSGNAWTFLINHTLSTILVGKWIEAGQPNPRSKEFMDLEAATGINFKIEREIEGLPTRLQEAMDKAVHTGFLGDGTTNPPEKEGPTVDLDLLGWSATYSRHMDMWVPVLDKERLLSSAAYPKGLENKDLKGKPGAEIAYKIVRNEALLMVGGWNYPLIARSLMANTSAARNNLRQKGVPLDTLTRDWEKMTEFSDIFEDLPIDTKLEVTSEFLQRLNLRGERKQPNVNKHHLRTKGLKKCVSALKQGACRNPTTVAGLKLTAYSKSRINKAKAVFDEINNLPKTESDDWSDRMDDADRLMKANNLYMREARSALEDVHNSLLALSGETVKAKTPQEKSTEKVSNPVVGYRLPAERATGVQHALLGVGVSRPSEGALTKNARKMKKRREKARGINH.

249–256 (GLPFIGKT) serves as a coordination point for GTP. Positions 387 to 591 (LIYADNIYIY…DKERLLSSAA (205 aa)) constitute a RdRp catalytic domain. The disordered stretch occupies residues 845–867 (EGALTKNARKMKKRREKARGINH). Basic residues predominate over residues 851-867 (NARKMKKRREKARGINH).

Interacts with VP3 in the cytoplasm. Post-translationally, may exist in multiple phosphorylated forms.

Its subcellular location is the virion. The catalysed reaction is RNA(n) + a ribonucleoside 5'-triphosphate = RNA(n+1) + diphosphate. Functionally, RNA-dependent RNA polymerase which is found both free and covalently attached to the genomic RNA. May also contain guanylyl and methyl transferase activities. This is RNA-directed RNA polymerase (VP1) from Blotched snakehead virus (BSNV).